A 371-amino-acid polypeptide reads, in one-letter code: Histidinol-phosphate aminotransferase (371 aa).

Residue K228 is modified to N6-(pyridoxal phosphate)lysine.

The protein belongs to the class-II pyridoxal-phosphate-dependent aminotransferase family. Histidinol-phosphate aminotransferase subfamily. The cofactor is pyridoxal 5'-phosphate.

The catalysed reaction is L-histidinol phosphate + 2-oxoglutarate = 3-(imidazol-4-yl)-2-oxopropyl phosphate + L-glutamate. It participates in amino-acid biosynthesis; L-histidine biosynthesis; L-histidine from 5-phospho-alpha-D-ribose 1-diphosphate: step 7/9. The sequence is that of Histidinol-phosphate aminotransferase from Methanococcus aeolicus (strain ATCC BAA-1280 / DSM 17508 / OCM 812 / Nankai-3).